A 443-amino-acid polypeptide reads, in one-letter code: Phenylalanine--tRNA ligase alpha subunit (443 aa).

Residues Thr-332, 375-377, and Tyr-415 contribute to the L-phenylalanine site; that span reads QVE. Residue Glu-417 participates in Mg(2+) binding. Phe-441 contributes to the L-phenylalanine binding site.

This sequence belongs to the class-II aminoacyl-tRNA synthetase family. Phe-tRNA synthetase alpha subunit type 2 subfamily. In terms of assembly, heterotetramer; dimer of two heterodimers formed by FARSA and FARSB. Mg(2+) is required as a cofactor.

The protein resides in the cytoplasm. It carries out the reaction tRNA(Phe) + L-phenylalanine + ATP = L-phenylalanyl-tRNA(Phe) + AMP + diphosphate + H(+). The chain is Phenylalanine--tRNA ligase alpha subunit (FARSA) from Gallus gallus (Chicken).